Here is a 1249-residue protein sequence, read N- to C-terminus: Protein transport protein Sec31A (1249 aa).

7 WD repeats span residues 4–47 (KEID…EIFE), 64–111 (SSSH…AGDK), 120–160 (KHTG…TPMT), 166–206 (QPPE…PIIK), 209–254 (DHSN…SPLR), 258–298 (NHAR…VLYE), and 301–342 (TNTQ…DGLR). Residues 161-470 (PGAKTQPPED…IDASQTDFEK (310 aa)) form an interaction with SEC13 region. A WD 8; interaction with SEC13 repeat occupies 397–429 (SFSFGGKLVTFENVTGQPQQGAEQPRRQPVFIS). Residue Arg423 is modified to Asymmetric dimethylarginine. Phosphoserine is present on residues Ser526 and Ser531. A Glycyl lysine isopeptide (Lys-Gly) (interchain with G-Cter in ubiquitin) cross-link involves residue Lys647. Disordered regions lie at residues 790–829 (QGRS…VQSQ), 842–940 (TTWS…RYPN), and 954–1123 (PHMY…PIGN). Positions 796 to 805 (GQESSRSSYE) are enriched in polar residues. A Phosphoserine modification is found at Ser799. The interaction with PDCD6 stretch occupies residues 800-1142 (SRSSYEGQPL…TEKITKKPIP (343 aa)). The ALG-2-binding site motif-2 (ABS-2) signature appears at 873-879 (GFIMHGN). Positions 898–908 (QPPPYPQPQPY) are enriched in pro residues. Composition is skewed to low complexity over residues 961 to 970 (PASSPTSSSA) and 991 to 1007 (PSSS…GTPP). A compositionally biased stretch (polar residues) spans 1013 to 1024 (PASQRTGPQNGW). Residues 1056 to 1074 (PGGDPQPQGLQQQPSASGP) are compositionally biased toward low complexity. A Phosphothreonine modification is found at Thr1190. Ser1192 carries the post-translational modification Phosphoserine. A Glycyl lysine isopeptide (Lys-Gly) (interchain with G-Cter in ubiquitin) cross-link involves residue Lys1246.

Belongs to the WD repeat SEC31 family. As to quaternary structure, COPII is composed of at least 5 proteins: the SEC23/24 complex, the SEC13/31 complex and SAR1. SEC13 and SEC31 make a 2:2 tetramer that forms the edge element of the COPII outer coat. The tetramer self-assembles in multiple copies to form the complete polyhedral cage. Interacts (via WD 8) with SEC13. Interacts with PDCD6; interaction takes place in response to cytosolic calcium increase and leads to bridge together the BCR(KLHL12) complex and SEC31A, leading to monoubiquitination. Interacts with KLHL12. Monoubiquitinated by the BCR(KLHL12) E3 ubiquitin ligase complex, leading to regulate the size of COPII coats. As to expression, ubiquitously expressed.

The protein localises to the cytoplasm. It localises to the cytoplasmic vesicle. The protein resides in the COPII-coated vesicle membrane. Its subcellular location is the endoplasmic reticulum membrane. In terms of biological role, component of the coat protein complex II (COPII) which promotes the formation of transport vesicles from the endoplasmic reticulum (ER). The coat has two main functions, the physical deformation of the endoplasmic reticulum membrane into vesicles and the selection of cargo molecules. The polypeptide is Protein transport protein Sec31A (Sec31a) (Rattus norvegicus (Rat)).